Reading from the N-terminus, the 461-residue chain is Cysteine--tRNA ligase (461 aa).

Residue C28 participates in Zn(2+) binding. The 'HIGH' region motif lies at I30–H40. Zn(2+) contacts are provided by C209, H234, and E238. Residues K266–S270 carry the 'KMSKS' region motif. K269 is a binding site for ATP.

Belongs to the class-I aminoacyl-tRNA synthetase family. Monomer. It depends on Zn(2+) as a cofactor.

It localises to the cytoplasm. The enzyme catalyses tRNA(Cys) + L-cysteine + ATP = L-cysteinyl-tRNA(Cys) + AMP + diphosphate. The chain is Cysteine--tRNA ligase from Salmonella arizonae (strain ATCC BAA-731 / CDC346-86 / RSK2980).